The following is a 342-amino-acid chain: Inositol-tetrakisphosphate 1-kinase 5 (342 aa).

1D-myo-inositol 1,3,4-trisphosphate-binding residues include lysine 25 and lysine 67. ATP is bound by residues arginine 102 and lysine 154. 1D-myo-inositol 1,3,4-trisphosphate contacts are provided by histidine 165 and lysine 197. Residues 186 to 197 (QEFVNHGGVIFK) and serine 212 each bind ATP. Residues aspartate 283, aspartate 298, and asparagine 300 each coordinate Mg(2+). Residue asparagine 300 coordinates 1D-myo-inositol 1,3,4-trisphosphate.

Belongs to the ITPK1 family. As to quaternary structure, monomer. Requires Mg(2+) as cofactor. Expressed in roots, leaves, flowers, anthers and embryos.

The enzyme catalyses 1D-myo-inositol 3,4,5,6-tetrakisphosphate + ATP = 1D-myo-inositol 1,3,4,5,6-pentakisphosphate + ADP + H(+). The catalysed reaction is 1D-myo-inositol 1,3,4-trisphosphate + ATP = 1D-myo-inositol 1,3,4,5-tetrakisphosphate + ADP + H(+). It catalyses the reaction 1D-myo-inositol 1,3,4-trisphosphate + ATP = 1D-myo-inositol 1,3,4,6-tetrakisphosphate + ADP + H(+). Kinase that can phosphorylate various inositol polyphosphate such as Ins(3,4,5,6)P4 or Ins(1,3,4)P3 and participates in phytic acid biosynthesis in developing seeds. Phytic acid is the primary storage form of phosphorus in cereal grains and other plant seeds. The polypeptide is Inositol-tetrakisphosphate 1-kinase 5 (ITPK5) (Oryza sativa subsp. japonica (Rice)).